The primary structure comprises 1058 residues: MSAMNPLLSFLFNHPNPSQKFRDQVAQLAHSNYAILVPQISLDDHCDAELTPEAVFSHVIRISHTGENQRARYFASANGRTVIFKNDQVMTYRGYKNNVTVNIVDQYVYTPVCWYLPRTCFQNFLVYEISGYLTEKPLPEAPKEIDQNQYDGPSFEDILLIYPNVGRQLSRLLATTFDNYTSTAANTEELDLEFERATDRAIEYVQAIDPLMVRRIIEEQRLTETQLEKKIDEYVESQLSRKLWNALIALRTNEDGPLDQAVESIKYLSLNQVDLPENEKHWEAKVVAAANVLQTLANTSTNESLPCNCRFLENTLMKCIDTLTDDSIQVNADVLVSLLLVVVARANISHLNSTIYYIRSFSSNAVDSGKLGYMLSTLEAVMYHIGENREQLEAISEANRWFFERVEKGDLTEFDFERPSMKSGLQRDDADWKTVFAATNPAGESALMCAVSSNQQSSLTCLLDHFGYTQEDILADRSVQGSTLLVSALRTENEDIIKLVLDRVRDCADLAHYLSVGDEYGRSVGHYFFHSLYLQQQVGSLINWTARDNQGQTPLSSLCRSYDNPDYHALFKNALKTCLDATGMVDLRVHTDAKGNTLLHTVSDEKVLSTLLNHPDVLVNVNQPNKRGMTALMAHAKYARLKAIEVLCKDPRIDFAPTDNKGMNVFDIARDRRTADFLDECYMSLQPNLGETDKYCEILRSVIADGELCFVIKTRQDGKLSAVRRPYSDFVFLQKWLAHEQPLSWFPALMTPTNPFAIPHRPSREILHAMHLRLNLFLRTLLLHPTFSNHELLWEWLLVQDISHTHLAERTTKKLENKKEKDLEEYIILGEPEMDEIEGFVSHALQQVDLMRKATMNLHQASVKLCNAHRDYCKSWMLMKETVDELKEIPGTSPRENIIANLSSAMVTLGDTFRINNSSPFVFSCYIESLQNMADATTLALAHPLAQISHLRLQQMLLVKLQADAVALSEKKTFRDFFHDREKEIRLIKNRIHITENEIRRLSMETKNAQITLASELGGFYQVHEHELTLSIKNIVSRNIKRHKELQGDLEEIQRRFI.

Positions 252–394 constitute a VPS9 domain; that stretch reads TNEDGPLDQA…IGENREQLEA (143 aa).

It belongs to the UPF0507 family.

The sequence is that of UPF0507 protein YALI0E18612g from Yarrowia lipolytica (strain CLIB 122 / E 150) (Yeast).